Consider the following 160-residue polypeptide: UPF0260 protein Rleg2_0895 (160 aa).

This sequence belongs to the UPF0260 family.

This Rhizobium leguminosarum bv. trifolii (strain WSM2304) protein is UPF0260 protein Rleg2_0895.